Reading from the N-terminus, the 540-residue chain is MSLKLPQAPNSGLFKQGYSSFSNADGAIIRNVEAVREIASILLTSMGPSGRNKIIVNKLGKKFITNDAATMLNELEIVHPVVKILIQASKQQEFEMGDNTNLVIILAGEFLNVAEKLLTLGLNVSEIIQGFNLANKFVMKTLDELVVEKVESFETDLLKAVKPVIAAKQYGVEDTIAKLVVDAVALVMKNGSFNVDNIRVVKVMGASLSQSQVVKGMVFPREPEGTVKNADQIQSCRVYQPHRYFHHRNQRYSCSSTMPRKCLISPRAKNNSWTSCARKSTIQGLRWLLPGSSVGELALHYLNKYGILVLRVPSKFDLRRICQVCGATPLPRLGAPTPDEMGEIDIIETKEIGGDRVTIFRQDESSSRTATIVVRGATQNNLDDIERAIDDGVNSIKGLIKDNRLLPGAGAVEIELMKRITAYQSTPGLLQLAIKSFAKAFEVIPRVLAETSGHDSSEILSKLHAAHAEDTGLRAGIDIDSGEVADTAVLDILATKKSAIDLAVDATNTILSIDQIIMAKRAGGPVMPQQPRPGNWDQDD.

It belongs to the TCP-1 chaperonin family. As to quaternary structure, heterooligomeric complex of about 850 to 900 kDa that forms two stacked rings, 12 to 16 nm in diameter.

The protein localises to the cytoplasm. In terms of biological role, molecular chaperone; assists the folding of proteins upon ATP hydrolysis. Known to play a role, in vitro, in the folding of actin and tubulin. In yeast may play a role in mitotic spindle formation. The sequence is that of T-complex protein 1 subunit theta (CCT8) from Candida albicans (Yeast).